The sequence spans 119 residues: Immunoglobulin heavy variable 3-15 (119 aa).

A signal peptide spans Met1–Cys19. The framework-1 stretch occupies residues Glu20–Ser44. The Ig-like domain maps to Glu20 to Thr119. An intrachain disulfide couples Cys41 to Cys117. A complementarity-determining-1 region spans residues Gly45–Trp52. The interval Met53–Arg69 is framework-2. A complementarity-determining-2 region spans residues Ile70 to Thr79. Residues Asp80–Cys117 are framework-3. The segment at Thr118–Thr119 is complementarity-determining-3.

In terms of assembly, immunoglobulins are composed of two identical heavy chains and two identical light chains; disulfide-linked.

It is found in the secreted. Its subcellular location is the cell membrane. Its function is as follows. V region of the variable domain of immunoglobulin heavy chains that participates in the antigen recognition. Immunoglobulins, also known as antibodies, are membrane-bound or secreted glycoproteins produced by B lymphocytes. In the recognition phase of humoral immunity, the membrane-bound immunoglobulins serve as receptors which, upon binding of a specific antigen, trigger the clonal expansion and differentiation of B lymphocytes into immunoglobulins-secreting plasma cells. Secreted immunoglobulins mediate the effector phase of humoral immunity, which results in the elimination of bound antigens. The antigen binding site is formed by the variable domain of one heavy chain, together with that of its associated light chain. Thus, each immunoglobulin has two antigen binding sites with remarkable affinity for a particular antigen. The variable domains are assembled by a process called V-(D)-J rearrangement and can then be subjected to somatic hypermutations which, after exposure to antigen and selection, allow affinity maturation for a particular antigen. This is Immunoglobulin heavy variable 3-15 from Homo sapiens (Human).